Here is a 245-residue protein sequence, read N- to C-terminus: Ribonuclease 3 (245 aa).

The 130-residue stretch at 17–146 (FTDKMKSLGL…FVGALYLDQG (130 aa)) folds into the RNase III domain. Glutamate 59 is a binding site for Mg(2+). The active site involves aspartate 63. Residues aspartate 132 and glutamate 135 each contribute to the Mg(2+) site. The active site involves glutamate 135. A DRBM domain is found at 172 to 241 (DFKTQFQEYV…AEQAYKLMKN (70 aa)).

This sequence belongs to the ribonuclease III family. In terms of assembly, homodimer. Mg(2+) is required as a cofactor.

The protein localises to the cytoplasm. The enzyme catalyses Endonucleolytic cleavage to 5'-phosphomonoester.. Functionally, digests double-stranded RNA. Involved in the processing of primary rRNA transcript to yield the immediate precursors to the large and small rRNAs (23S and 16S). Processes some mRNAs, and tRNAs when they are encoded in the rRNA operon. Processes pre-crRNA and tracrRNA of type II CRISPR loci if present in the organism. This chain is Ribonuclease 3, found in Staphylococcus epidermidis (strain ATCC 35984 / DSM 28319 / BCRC 17069 / CCUG 31568 / BM 3577 / RP62A).